Here is a 935-residue protein sequence, read N- to C-terminus: Coiled-coil domain-containing protein 66 (935 aa).

The segment covering 76-96 (LDTSQAKPENSRLTFSPSTDK) has biased composition (polar residues). The tract at residues 76–103 (LDTSQAKPENSRLTFSPSTDKQYSEKDS) is disordered. Phosphothreonine is present on Thr114. Ser366 carries the post-translational modification Phosphoserine. Positions 462-555 (LEHQKAIMAQ…EQRIRELAQK (94 aa)) form a coiled coil. 3 disordered regions span residues 470–491 (AQVE…KEEQ), 577–602 (TISS…DTGV), and 738–794 (ENLS…RTQQ). The segment covering 473 to 491 (EENRRKKRLEEEQRKKEEQ) has biased composition (basic and acidic residues). The interval 567-935 (GAQVDYKAFT…NQEDNFSSSF (369 aa)) is mediates localization to cilia, centrosomes and spindle microtubules and the interaction with PCM1, CEP290, CEP104 and CSPP1. The span at 590-602 (DTSTASPKKDTGV) shows a compositional bias: polar residues. Ser595 is subject to Phosphoserine. The segment covering 752–782 (SHRETESESRLHLIKKVEEPLKTPSVSKERF) has biased composition (basic and acidic residues). The span at 783–794 (QTSPAVKNRTQQ) shows a compositional bias: polar residues.

In terms of assembly, homodimer; disulfide-linked. Interacts with CEP290. Interacts with PCM1. Interacts with ARMC9, TOGARAM1, CSPP1 and CEP104. Interacts with CDK5RAP2, CEP152, CEP192, TBG1 and PRC1. Widely expressed. Expressed in retina by rod photoreceptors but also detected in outer plexiform and ganglion cell layers (at protein level).

It is found in the cytoplasm. The protein localises to the cytoskeleton. Its subcellular location is the microtubule organizing center. It localises to the centrosome. The protein resides in the centriolar satellite. It is found in the cell projection. The protein localises to the cilium. Its subcellular location is the cilium basal body. It localises to the cilium axoneme. The protein resides in the photoreceptor inner segment. It is found in the photoreceptor outer segment. Its function is as follows. Microtubule-binding protein required for ciliogenesis. May function in ciliogenesis by mediating the transport of proteins like BBS4 to the cilium, but also through the organization of the centriolar satellites. Required for the assembly of signaling-competent cilia with proper structure and length. Mediates this function in part by regulating transition zone assembly and basal body recruitment of the IFT-B complex. Cooperates with the ciliopathy proteins CSPP1 and CEP104 during cilium length regulation. Plays two important roles during cell division. First, is required for mitotic progression via regulation of spindle assembly, organization and orientation, levels of spindle microtubules (MTs), kinetochore-fiber integrity, and chromosome alignment. Second, functions during cytokinesis in part by regulating assembly and organization of central spindle and midbody MTs. Plays a role in retina morphogenesis and/or homeostasis. This Mus musculus (Mouse) protein is Coiled-coil domain-containing protein 66.